We begin with the raw amino-acid sequence, 140 residues long: Lysozyme E (140 aa).

Residues 1-18 form the signal peptide; the sequence is MKAFIVLVALAMAAPALG. The 122-residue stretch at 19-140 folds into the C-type lysozyme domain; the sequence is RTLDRCSLAR…GWLPSIDGCF (122 aa). Disulfide bonds link Cys24-Cys139, Cys45-Cys129, Cys80-Cys96, and Cys92-Cys110. Active-site residues include Glu50 and Asp68.

This sequence belongs to the glycosyl hydrolase 22 family. In terms of tissue distribution, found in the midgut.

The catalysed reaction is Hydrolysis of (1-&gt;4)-beta-linkages between N-acetylmuramic acid and N-acetyl-D-glucosamine residues in a peptidoglycan and between N-acetyl-D-glucosamine residues in chitodextrins.. Functionally, unlikely to play an active role in the humoral immune defense. May have a function in the digestion of bacteria in the food. The protein is Lysozyme E (LysE) of Drosophila melanogaster (Fruit fly).